We begin with the raw amino-acid sequence, 699 residues long: D-(-)-3-hydroxybutyrate oligomer hydrolase (699 aa).

The first 33 residues, 1 to 33 (MTAIRGGSRRAPGLALALLGGVLLGACHGDENA), serve as a signal peptide directing secretion. Catalysis depends on serine 311, which acts as the Charge relay system.

Belongs to the D-(-)-3-hydroxybutyrate oligomer hydrolase family.

Its subcellular location is the secreted. The catalysed reaction is (3R)-hydroxybutanoate dimer + H2O = 2 (R)-3-hydroxybutanoate + H(+). It functions in the pathway lipid metabolism; butanoate metabolism. Functionally, participates in the degradation of poly-3-hydroxybutyrate (PHB). It works downstream of poly(3-hydroxybutyrate) depolymerase, hydrolyzing D(-)-3-hydroxybutyrate oligomers of various length (3HB-oligomers) into 3HB-monomers. The protein is D-(-)-3-hydroxybutyrate oligomer hydrolase of Burkholderia mallei (strain NCTC 10247).